The following is a 100-amino-acid chain: Small ribosomal subunit protein uS14c (100 aa).

Residues 28–45 are compositionally biased toward basic and acidic residues; that stretch reads KKEIKKVPSLSEKMEIHG. Residues 28-59 form a disordered region; it reads KKEIKKVPSLSEKMEIHGKLQSPPRNSAPTRL.

The protein belongs to the universal ribosomal protein uS14 family. As to quaternary structure, part of the 30S ribosomal subunit.

Its subcellular location is the plastid. It is found in the chloroplast. Binds 16S rRNA, required for the assembly of 30S particles. The protein is Small ribosomal subunit protein uS14c of Nandina domestica (Heavenly bamboo).